The sequence spans 432 residues: MQSKTFSVLSSCLLLIATVQGQLSGSVGPSTSISDKKAVKTCNVLDYGATNDNKTDVGQPIMNAFEDCGSGGVIYIPEGDYLIQEWVSLRNGTAFAIQLDGVIYRNGTTTSQGYMFGISGGSDFELYSSTSKGAIQGSGYLYHMNGEFTAPRLLHISDVSHWSVHDIALVDAPMFHFVIDDASNGEVYNMAIRGGNSGGLDGIDVSGDNIWIHDVMVTNKDECVTVKTGSHNFQIENIYCNWSGGCAMDSLGSGTNVSNIVYRNIYTWNSNQMYMIKSNGGDGEVSNLLFENFIGHGNAYSLDLDSEWSSMDTVDGDDGESRPPIRVICPEAIPCTDITIEDVDLWTEEGDSETYVCKNAFGSGACLKSDSSSTATYATTTTVTSAPSGYSATTMAADLTSAFGTDASIPIPTIPTSFYPGATPYSALAGSS.

A signal peptide spans 1 to 21 (MQSKTFSVLSSCLLLIATVQG). Cys-42 and Cys-68 form a disulfide bridge. Asn-53, Asn-91, and Asn-106 each carry an N-linked (GlcNAc...) asparagine glycan. The Proton donor role is filled by Asp-221. An intrachain disulfide couples Cys-223 to Cys-240. N-linked (GlcNAc...) asparagine glycosylation is found at Asn-241 and Asn-256. His-296 is an active-site residue. Cystine bridges form between Cys-329-Cys-335 and Cys-357-Cys-366.

It belongs to the glycosyl hydrolase 28 family.

The protein localises to the secreted. Its function is as follows. Pectinolytic enzymes consist of four classes of enzymes: pectine lyase, polygalacturonase, pectin methylesterase and rhamnogalacturonase. Hydrolyzes alpha-D-galacturonopyranosyl-(1,2)-alpha-L-rhamnopyranosyl linkages in the backbone of the hairy regions of pectins. In Aspergillus oryzae (strain ATCC 42149 / RIB 40) (Yellow koji mold), this protein is Probable rhamnogalacturonase E (rhgE).